The following is a 109-amino-acid chain: Large ribosomal subunit protein uL22 (109 aa).

It belongs to the universal ribosomal protein uL22 family. As to quaternary structure, part of the 50S ribosomal subunit.

Its function is as follows. This protein binds specifically to 23S rRNA; its binding is stimulated by other ribosomal proteins, e.g. L4, L17, and L20. It is important during the early stages of 50S assembly. It makes multiple contacts with different domains of the 23S rRNA in the assembled 50S subunit and ribosome. The globular domain of the protein is located near the polypeptide exit tunnel on the outside of the subunit, while an extended beta-hairpin is found that lines the wall of the exit tunnel in the center of the 70S ribosome. This Paraburkholderia phymatum (strain DSM 17167 / CIP 108236 / LMG 21445 / STM815) (Burkholderia phymatum) protein is Large ribosomal subunit protein uL22.